The following is a 114-amino-acid chain: Methylamine utilization protein MauL (114 aa).

The protein operates within one-carbon metabolism; methylamine degradation. Functionally, probably involved in TTQ prosthetic group biosynthesis. This Methylorubrum extorquens (strain ATCC 14718 / DSM 1338 / JCM 2805 / NCIMB 9133 / AM1) (Methylobacterium extorquens) protein is Methylamine utilization protein MauL (mauL).